Here is a 198-residue protein sequence, read N- to C-terminus: Na(+)-translocating NADH-quinone reductase subunit E (198 aa).

Helical transmembrane passes span 11–31 (SVFI…FLAV), 35–55 (VSTA…SVPV), 77–97 (FLNF…LEMI), 110–130 (GIFL…SFMV), 140–160 (VVYG…LAGI), and 176–196 (LGIT…FSGV).

The protein belongs to the NqrDE/RnfAE family. As to quaternary structure, composed of six subunits; NqrA, NqrB, NqrC, NqrD, NqrE and NqrF.

The protein localises to the cell inner membrane. It catalyses the reaction a ubiquinone + n Na(+)(in) + NADH + H(+) = a ubiquinol + n Na(+)(out) + NAD(+). Functionally, NQR complex catalyzes the reduction of ubiquinone-1 to ubiquinol by two successive reactions, coupled with the transport of Na(+) ions from the cytoplasm to the periplasm. NqrA to NqrE are probably involved in the second step, the conversion of ubisemiquinone to ubiquinol. The protein is Na(+)-translocating NADH-quinone reductase subunit E of Histophilus somni (strain 129Pt) (Haemophilus somnus).